Consider the following 415-residue polypeptide: Glutamyl-tRNA reductase (415 aa).

Substrate is bound by residues 49–52 (TCNR), serine 104, 109–111 (EPQ), and glutamine 115. Cysteine 50 acts as the Nucleophile in catalysis. Residue 184 to 189 (GAGEMI) coordinates NADP(+).

The protein belongs to the glutamyl-tRNA reductase family. As to quaternary structure, homodimer.

It catalyses the reaction (S)-4-amino-5-oxopentanoate + tRNA(Glu) + NADP(+) = L-glutamyl-tRNA(Glu) + NADPH + H(+). The protein operates within porphyrin-containing compound metabolism; protoporphyrin-IX biosynthesis; 5-aminolevulinate from L-glutamyl-tRNA(Glu): step 1/2. In terms of biological role, catalyzes the NADPH-dependent reduction of glutamyl-tRNA(Glu) to glutamate 1-semialdehyde (GSA). The chain is Glutamyl-tRNA reductase from Neisseria gonorrhoeae (strain ATCC 700825 / FA 1090).